Consider the following 407-residue polypeptide: Succinate--CoA ligase [ADP-forming] subunit beta, hydrogenosomal (407 aa).

A hydrogenosome-targeting transit peptide spans 1 to 9; the sequence is MLSSSFARN. One can recognise an ATP-grasp domain in the interval 18–261; that stretch reads KEICAKYNVA…LKQVNPFEIR (244 aa). Residues Lys55, 62 to 64, and Glu124 contribute to the ATP site; that span reads GRG. Positions 216 and 230 each coordinate Mg(2+). Substrate-binding positions include Asn281 and 338–340; that span reads GIV.

This sequence belongs to the succinate/malate CoA ligase beta subunit family. In terms of assembly, heterodimer of an alpha and a beta subunit. It depends on Mg(2+) as a cofactor.

The protein localises to the hydrogenosome. It catalyses the reaction succinate + ATP + CoA = succinyl-CoA + ADP + phosphate. It participates in carbohydrate metabolism; tricarboxylic acid cycle; succinate from succinyl-CoA (ligase route): step 1/1. Functionally, succinyl-CoA synthetase functions in the citric acid cycle (TCA), coupling the hydrolysis of succinyl-CoA to the synthesis of ATP and thus represents the only step of substrate-level phosphorylation in the TCA. The beta subunit provides nucleotide specificity of the enzyme and binds the substrate succinate, while the binding sites for coenzyme A and phosphate are found in the alpha subunit. This chain is Succinate--CoA ligase [ADP-forming] subunit beta, hydrogenosomal, found in Trichomonas vaginalis.